Here is a 283-residue protein sequence, read N- to C-terminus: Pantothenate synthetase (283 aa).

31-38 (MGALHDGH) contacts ATP. The active-site Proton donor is histidine 38. Glutamine 62 lines the (R)-pantoate pocket. Residue glutamine 62 coordinates beta-alanine. 148-151 (GKKD) is a binding site for ATP. Position 154 (glutamine 154) interacts with (R)-pantoate. Residues isoleucine 177 and 185–188 (KSSR) contribute to the ATP site.

It belongs to the pantothenate synthetase family. In terms of assembly, homodimer.

Its subcellular location is the cytoplasm. The enzyme catalyses (R)-pantoate + beta-alanine + ATP = (R)-pantothenate + AMP + diphosphate + H(+). Its pathway is cofactor biosynthesis; (R)-pantothenate biosynthesis; (R)-pantothenate from (R)-pantoate and beta-alanine: step 1/1. Functionally, catalyzes the condensation of pantoate with beta-alanine in an ATP-dependent reaction via a pantoyl-adenylate intermediate. This Oceanobacillus iheyensis (strain DSM 14371 / CIP 107618 / JCM 11309 / KCTC 3954 / HTE831) protein is Pantothenate synthetase.